The following is a 1115-amino-acid chain: Gamma tubulin complex adapter mto1 (1115 aa).

The interval 25–180 (LTDEEVRRIL…NYISSSLDQL (156 aa)) is disordered. Basic and acidic residues-rich tracts occupy residues 28–41 (EEVR…KEGS) and 56–71 (EASH…DSLK). Composition is skewed to polar residues over residues 72–102 (SDSG…VNKL), 119–130 (DTTNFDRLNDNI), and 139–151 (PVLT…QSQE). Ser94 is modified (phosphoserine). A compositionally biased stretch (low complexity) spans 165–176 (SDPSSPNYISSS). A coiled-coil region spans residues 445-915 (NEALLLRKQE…ERNSLIKNIV (471 aa)). Residues 523 to 537 (LMRMEQQWREDVDQL) form a required for interaction with mto2 region. The segment covering 1001-1011 (GSTSSIPNSPR) has biased composition (polar residues). 2 disordered regions span residues 1001–1037 (GSTS…AVQR) and 1067–1115 (EQEG…QEHK). Ser1005 and Ser1009 each carry phosphoserine. Basic and acidic residues-rich tracts occupy residues 1016 to 1025 (VSLDSEDKKL) and 1067 to 1084 (EQEG…RLQD). A coiled-coil region spans residues 1072 to 1102 (KRDKLGARERLQDLIRQNRSLSRQIKTDKES). Composition is skewed to polar residues over residues 1086-1095 (IRQNRSLSRQ) and 1104-1115 (SRSPSISSQEHK).

Interacts with mto2; the interaction is direct and required for efficient binding to the gamma-tubulin complex. Interacts with gamma tubulin complex subunits alp4, alp6 and gtb1. Interacts with mcp6.

Its subcellular location is the cytoplasm. It is found in the cytoskeleton. It localises to the microtubule organizing center. The protein resides in the spindle pole body. Its function is as follows. Spindle pole body (SPB) component that acts as the gamma-tubulin complex-binding protein of the SPB outer plaque. Promotes nucleation of all cytoplasmic microtubules by recruiting the gamma-tubulin complex to the spindle pole body (SPB), to the interphase microtubule organizing center (iMTOC), and to the equatorial MTOC (eMTOC) during anaphase. This chain is Gamma tubulin complex adapter mto1, found in Schizosaccharomyces pombe (strain 972 / ATCC 24843) (Fission yeast).